A 280-amino-acid chain; its full sequence is Gastrula zinc finger protein XlCGF46.1 (280 aa).

C2H2-type zinc fingers lie at residues 6–28, 34–56, 62–84, 90–112, 118–140, 146–168, 174–196, 202–224, 230–252, and 258–280; these read FACKECGKSFSNKAYFESHKLMH, FECTECGKQFLLKQLLKSHQLIH, FVCPECGQGYKSKQGLQNHLLCH, FTCKECGKKFLLQKHLNRHKLTH, FICSECGKRFSRKDGLGMHQLIH, YVCTECGTSFRVRPQLRIHLRTH, FKCEDCGRVFATGTKLQVHKVTH, FTCEKCGKSFTQKTNLNTHQLTH, FKCEECGKCFSRKDYLRVHQRFH, and YKCNECEESFCRKDLLQTHELSH.

This sequence belongs to the krueppel C2H2-type zinc-finger protein family.

It localises to the nucleus. In terms of biological role, may be involved in transcriptional regulation. The chain is Gastrula zinc finger protein XlCGF46.1 from Xenopus laevis (African clawed frog).